The primary structure comprises 355 residues: UDP-3-O-acylglucosamine N-acyltransferase (355 aa).

The Proton acceptor role is filled by H248.

It belongs to the transferase hexapeptide repeat family. LpxD subfamily. Homotrimer.

The catalysed reaction is a UDP-3-O-[(3R)-3-hydroxyacyl]-alpha-D-glucosamine + a (3R)-hydroxyacyl-[ACP] = a UDP-2-N,3-O-bis[(3R)-3-hydroxyacyl]-alpha-D-glucosamine + holo-[ACP] + H(+). It functions in the pathway bacterial outer membrane biogenesis; LPS lipid A biosynthesis. Catalyzes the N-acylation of UDP-3-O-acylglucosamine using 3-hydroxyacyl-ACP as the acyl donor. Is involved in the biosynthesis of lipid A, a phosphorylated glycolipid that anchors the lipopolysaccharide to the outer membrane of the cell. In Syntrophobacter fumaroxidans (strain DSM 10017 / MPOB), this protein is UDP-3-O-acylglucosamine N-acyltransferase.